The sequence spans 367 residues: Histidinol-phosphate aminotransferase (367 aa).

An N6-(pyridoxal phosphate)lysine modification is found at lysine 226.

It belongs to the class-II pyridoxal-phosphate-dependent aminotransferase family. Histidinol-phosphate aminotransferase subfamily. As to quaternary structure, homodimer. Pyridoxal 5'-phosphate is required as a cofactor.

It carries out the reaction L-histidinol phosphate + 2-oxoglutarate = 3-(imidazol-4-yl)-2-oxopropyl phosphate + L-glutamate. The protein operates within amino-acid biosynthesis; L-histidine biosynthesis; L-histidine from 5-phospho-alpha-D-ribose 1-diphosphate: step 7/9. The sequence is that of Histidinol-phosphate aminotransferase from Wolinella succinogenes (strain ATCC 29543 / DSM 1740 / CCUG 13145 / JCM 31913 / LMG 7466 / NCTC 11488 / FDC 602W) (Vibrio succinogenes).